Here is a 305-residue protein sequence, read N- to C-terminus: Peroxisome biogenesis factor 2 (305 aa).

Over 1 to 15 the chain is Peroxisomal matrix; it reads MASRKENAKSANRVL. A helical transmembrane segment spans residues 16–42; sequence RISQLDALELNKALEQLVWSQFTQCFH. Residues 43-48 are Cytoplasmic-facing; sequence GFKPGL. A helical transmembrane segment spans residues 49–74; sequence LARFEPEVKACLWVFLWRFTIYSKNA. The Peroxisomal matrix portion of the chain corresponds to 75 to 98; the sequence is TVGQSVLNIKYKNDFSPNLRYQPP. K84 bears the N6-acetyllysine mark. Residues 99–125 form a helical membrane-spanning segment; it reads SKNQKIWYAVCTIGGRWLEERCYDLFR. At 126–133 the chain is on the cytoplasmic side; it reads NHHLASFG. The chain crosses the membrane as a helical span at residues 134-160; sequence KVKQCVNFVIGLLKLGGLINFLIFLQR. Topologically, residues 161-187 are peroxisomal matrix; it reads GKFATLTERLLGIHSVFCKPQNICEVG. Residues 188 to 211 traverse the membrane as a helical segment; the sequence is FEYMNRELLWHGFAEFLIFLLPLI. Over 212–305 the chain is Cytoplasmic; sequence NVQKLKAKLS…GIEMSEVNAL (94 aa). Zn(2+) is bound by residues C244, C247, C259, H261, C264, C267, C280, and C283. The RING-type zinc finger occupies 244 to 284; the sequence is CALCGEWPTMPHTIGCEHIFCYFCAKSSFLFDVYFTCPKCG.

Belongs to the pex2/pex10/pex12 family. Component of the PEX2-PEX10-PEX12 retrotranslocation channel, composed of PEX2, PEX10 and PEX12. Forms intramolecular and intermolecular disulfide bonds in response to reactive oxygen species (ROS), promoting higher stability.

The protein resides in the peroxisome membrane. It catalyses the reaction [E2 ubiquitin-conjugating enzyme]-S-ubiquitinyl-L-cysteine + [acceptor protein]-L-cysteine = [E2 ubiquitin-conjugating enzyme]-L-cysteine + [acceptor protein]-S-ubiquitinyl-L-cysteine.. It carries out the reaction S-ubiquitinyl-[E2 ubiquitin-conjugating enzyme]-L-cysteine + [acceptor protein]-L-lysine = [E2 ubiquitin-conjugating enzyme]-L-cysteine + N(6)-ubiquitinyl-[acceptor protein]-L-lysine.. It participates in protein modification; protein ubiquitination. Its function is as follows. E3 ubiquitin-protein ligase component of a retrotranslocation channel required for peroxisome organization by mediating export of the PEX5 receptor from peroxisomes to the cytosol, thereby promoting PEX5 recycling. The retrotranslocation channel is composed of PEX2, PEX10 and PEX12; each subunit contributing transmembrane segments that coassemble into an open channel that specifically allows the passage of PEX5 through the peroxisomal membrane. PEX2 also regulates peroxisome organization by acting as a E3 ubiquitin-protein ligase. PEX2 ubiquitinates PEX5 during its passage through the retrotranslocation channel: catalyzes monoubiquitination of PEX5 at 'Cys-11', a modification that acts as a signal for PEX5 extraction into the cytosol. Required for pexophagy in response to starvation by mediating ubiquitination of peroxisomal proteins, such as PEX5 and ABCD3/PMP70. Also involved in the response to reactive oxygen species (ROS) by mediating 'Lys-48'-linked polyubiquitination and subsequent degradation of PNPLA2/ATGL, thereby regulating lipolysis. This Homo sapiens (Human) protein is Peroxisome biogenesis factor 2.